Reading from the N-terminus, the 348-residue chain is NADH-ubiquinone oxidoreductase chain 2 (348 aa).

Transmembrane regions (helical) follow at residues 1–21 (MSPY…TITF), 25–45 (SWLM…PLMV), 60–80 (FLTQ…NAWM), 93–115 (LSAP…HFWL), 149–169 (LNTT…GLGG), 177–197 (KVLA…IQYS), 200–220 (LALL…LTLM), 239–259 (IATM…PLTG), 274–294 (NLPA…FFYL), and 326–346 (LAML…MVAI).

This sequence belongs to the complex I subunit 2 family.

The protein resides in the mitochondrion inner membrane. It carries out the reaction a ubiquinone + NADH + 5 H(+)(in) = a ubiquinol + NAD(+) + 4 H(+)(out). Its function is as follows. Core subunit of the mitochondrial membrane respiratory chain NADH dehydrogenase (Complex I) that is believed to belong to the minimal assembly required for catalysis. Complex I functions in the transfer of electrons from NADH to the respiratory chain. The immediate electron acceptor for the enzyme is believed to be ubiquinone. This is NADH-ubiquinone oxidoreductase chain 2 (MT-ND2) from Latimeria chalumnae (Coelacanth).